The following is a 790-amino-acid chain: MPAAIVHSADPSSTSILVEVEGMKCAGCVAAVERRLQQTAGVEAVSVNLITRLAKVDYDAALIEDPTVLTTEITGLGFRAQLRQDDNPLTLPIAEIPPLQQQRLQLAIAAFLLIVSSWGHLGHWLDHPLPGTDQLWFHALLATWALLGPGRSILQAGWQGLRCGAPNMNSLVLLGTGSAYLASLVALLWPQLGWVCFFDEPVMLLGFILLGRTLEEQARFRSQAALQNLLALQPETTQLLTAPSSIAPQDLLEAPAQIWPVAQLRAGDYVQVLPGDRIPVDGCIVAGQSTLDTAMLTGEPLPQPCQVGDRVCAGTLNLSHRLVIRAEQTGSQTRLAAIVRCVAEAQQRKAPVQRFADAIAGRFVYGVCAIAALTFGFWATLGSRWWPQVLQQPLPGLLIHAPHHGMEMAHPHSHSPLLLALTLAISVLVVACPCALGLATPTAILVATGLAAEQGILVRGGDVLEQLARIKHFVFDKTGTLTQGQFELIEIQPLADVDPDRLLQWAAALEADSRHPLATALQTAAQAANLAPIAASDRQQVPGLGVSGTCDGRSLRLGNPTWVQVATAKLPTGSAAATSIWLADDQQLLACFWLQDQPRPEAAEVVQALRSRGATVQILSGDRQTTAVALAQQLGLESETVVAEVLPEDKAAAIAALQSQGDAVAMIGDGINDAPALATAAVGISLAAGSDIAQDSAGLLLSRDRLDSVLVAWNLSQMGLRTIRQNLTWALGYNVVMLPLAAGAFLPAYGLALTPAIAGACMAVSSLAVVSNSLLLRYWFRRSLNHSVSV.

Topologically, residues 1–105 (MPAAIVHSAD…IPPLQQQRLQ (105 aa)) are cytoplasmic. Residues 14–81 (TSILVEVEGM…EITGLGFRAQ (68 aa)) form the HMA domain. Residues cysteine 25 and cysteine 28 each contribute to the Cu(+) site. Residues 106-127 (LAIAAFLLIVSSWGHLGHWLDH) traverse the membrane as a helical segment. Residues 128–136 (PLPGTDQLW) lie on the Extracellular side of the membrane. Residues 137–156 (FHALLATWALLGPGRSILQA) form a helical membrane-spanning segment. Residues 157 to 163 (GWQGLRC) lie on the Cytoplasmic side of the membrane. A helical transmembrane segment spans residues 164–184 (GAPNMNSLVLLGTGSAYLASL). The Extracellular portion of the chain corresponds to 185–198 (VALLWPQLGWVCFF). A helical membrane pass occupies residues 199–219 (DEPVMLLGFILLGRTLEEQAR). Over 220-358 (FRSQAALQNL…KAPVQRFADA (139 aa)) the chain is Cytoplasmic. Residues 359-381 (IAGRFVYGVCAIAALTFGFWATL) form a helical membrane-spanning segment. Residues 382–420 (GSRWWPQVLQQPLPGLLIHAPHHGMEMAHPHSHSPLLLA) are Extracellular-facing. Residues 421-438 (LTLAISVLVVACPCALGL) form a helical membrane-spanning segment. The Cytoplasmic segment spans residues 439–723 (ATPTAILVAT…NLSQMGLRTI (285 aa)). Aspartate 476 serves as the catalytic 4-aspartylphosphate intermediate. 2 residues coordinate Mg(2+): aspartate 669 and aspartate 673. The chain crosses the membrane as a helical span at residues 724–743 (RQNLTWALGYNVVMLPLAAG). The Extracellular portion of the chain corresponds to 744–755 (AFLPAYGLALTP). The chain crosses the membrane as a helical span at residues 756–774 (AIAGACMAVSSLAVVSNSL). At 775–790 (LLRYWFRRSLNHSVSV) the chain is on the cytoplasmic side.

This sequence belongs to the cation transport ATPase (P-type) (TC 3.A.3) family. Type IB subfamily.

Its subcellular location is the cell membrane. It carries out the reaction Cu(+)(in) + ATP + H2O = Cu(+)(out) + ADP + phosphate + H(+). Involved in copper transport. This Synechococcus elongatus (strain ATCC 33912 / PCC 7942 / FACHB-805) (Anacystis nidulans R2) protein is Probable copper-transporting ATPase SynA (synA).